A 223-amino-acid chain; its full sequence is Neurotrophic factor BDNF precursor form (223 aa).

The N-terminal stretch at 1-5 (SCMKA) is a signal peptide. The propeptide occupies 6–114 (APMKEVSIRG…AANMSMRVRR (109 aa)). An N-linked (GlcNAc...) asparagine glycan is attached at asparagine 107. 2 disulfides stabilise this stretch: cysteine 127-cysteine 194 and cysteine 172-cysteine 223.

Belongs to the NGF-beta family.

It localises to the secreted. Its function is as follows. Promotes the survival of neuronal populations that are all located either in the central nervous system or directly connected to it. This chain is Neurotrophic factor BDNF precursor form (BDNF), found in Eryx johnii (Indian red sand boa).